Reading from the N-terminus, the 518-residue chain is Protein nucleotidyltransferase YdiU (518 aa).

Residues glycine 100, glycine 102, arginine 103, lysine 123, aspartate 135, glycine 136, arginine 193, and arginine 200 each contribute to the ATP site. Residue aspartate 270 is the Proton acceptor of the active site. 2 residues coordinate Mg(2+): asparagine 271 and aspartate 280. Aspartate 280 contributes to the ATP binding site.

The protein belongs to the SELO family. Mg(2+) is required as a cofactor. Mn(2+) serves as cofactor.

The catalysed reaction is L-seryl-[protein] + ATP = 3-O-(5'-adenylyl)-L-seryl-[protein] + diphosphate. The enzyme catalyses L-threonyl-[protein] + ATP = 3-O-(5'-adenylyl)-L-threonyl-[protein] + diphosphate. It carries out the reaction L-tyrosyl-[protein] + ATP = O-(5'-adenylyl)-L-tyrosyl-[protein] + diphosphate. It catalyses the reaction L-histidyl-[protein] + UTP = N(tele)-(5'-uridylyl)-L-histidyl-[protein] + diphosphate. The catalysed reaction is L-seryl-[protein] + UTP = O-(5'-uridylyl)-L-seryl-[protein] + diphosphate. The enzyme catalyses L-tyrosyl-[protein] + UTP = O-(5'-uridylyl)-L-tyrosyl-[protein] + diphosphate. Its function is as follows. Nucleotidyltransferase involved in the post-translational modification of proteins. It can catalyze the addition of adenosine monophosphate (AMP) or uridine monophosphate (UMP) to a protein, resulting in modifications known as AMPylation and UMPylation. The polypeptide is Protein nucleotidyltransferase YdiU (Xanthomonas oryzae pv. oryzae (strain PXO99A)).